Here is a 149-residue protein sequence, read N- to C-terminus: NPC intracellular cholesterol transporter 2 (149 aa).

An N-terminal signal peptide occupies residues 1 to 19 (MRFLTVAFLFLALSASALA). 3 cysteine pairs are disulfide-bonded: cysteine 27-cysteine 140, cysteine 42-cysteine 47, and cysteine 93-cysteine 99. Residue asparagine 58 is glycosylated (N-linked (GlcNAc...) asparagine). Residue lysine 116 is modified to N6-acetyllysine.

This sequence belongs to the NPC2 family. Interacts with NPC1 (via the second lumenal domain) in a cholestrol-dependent manner. Interacts with NUS1/NgBR, the interaction stabilizes NCP2 and regulates cholesterol trafficking. Interacts with DHDDS. Interacts with NEDD4L (via C2 domain). Interacts with NPC1L1. Expressed in kidney, spleen, liver and mammary gland, but not in testis.

The protein resides in the secreted. The protein localises to the endoplasmic reticulum. It is found in the lysosome. It carries out the reaction cholesterol(in) = cholesterol(out). Intracellular cholesterol transporter which acts in concert with NPC1 and plays an important role in the egress of cholesterol from the lysosomal compartment. Unesterified cholesterol that has been released from LDLs in the lumen of the late endosomes/lysosomes is transferred by NPC2 to the cholesterol-binding pocket in the N-terminal domain of NPC1. May bind and mobilize cholesterol that is associated with membranes. NPC2 binds cholesterol with a 1:1 stoichiometry. Can bind a variety of sterols, including lathosterol, desmosterol and the plant sterols stigmasterol and beta-sitosterol. The secreted form of NCP2 regulates biliary cholesterol secretion via stimulation of ABCG5/ABCG8-mediated cholesterol transport. In Bos taurus (Bovine), this protein is NPC intracellular cholesterol transporter 2.